A 111-amino-acid polypeptide reads, in one-letter code: Putative pterin-4-alpha-carbinolamine dehydratase (111 aa).

This sequence belongs to the pterin-4-alpha-carbinolamine dehydratase family.

It catalyses the reaction (4aS,6R)-4a-hydroxy-L-erythro-5,6,7,8-tetrahydrobiopterin = (6R)-L-erythro-6,7-dihydrobiopterin + H2O. The polypeptide is Putative pterin-4-alpha-carbinolamine dehydratase (Chlorobaculum tepidum (strain ATCC 49652 / DSM 12025 / NBRC 103806 / TLS) (Chlorobium tepidum)).